The sequence spans 151 residues: Deoxyuridine 5'-triphosphate nucleotidohydrolase (151 aa).

Substrate is bound by residues R70–G72, N83, L87–D89, and M97.

This sequence belongs to the dUTPase family. Requires Mg(2+) as cofactor.

The enzyme catalyses dUTP + H2O = dUMP + diphosphate + H(+). Its pathway is pyrimidine metabolism; dUMP biosynthesis; dUMP from dCTP (dUTP route): step 2/2. Functionally, this enzyme is involved in nucleotide metabolism: it produces dUMP, the immediate precursor of thymidine nucleotides and it decreases the intracellular concentration of dUTP so that uracil cannot be incorporated into DNA. In Psychromonas ingrahamii (strain DSM 17664 / CCUG 51855 / 37), this protein is Deoxyuridine 5'-triphosphate nucleotidohydrolase.